Consider the following 365-residue polypeptide: tRNA-specific 2-thiouridylase MnmA (365 aa).

Residues 14-21 and Leu-40 each bind ATP; that span reads AMSGGVDS. The active-site Nucleophile is Cys-108. A disulfide bridge links Cys-108 with Cys-204. ATP is bound at residue Gly-132. The interaction with tRNA stretch occupies residues 154–156; that stretch reads KDQ. Cys-204 functions as the Cysteine persulfide intermediate in the catalytic mechanism.

Belongs to the MnmA/TRMU family.

Its subcellular location is the cytoplasm. The catalysed reaction is S-sulfanyl-L-cysteinyl-[protein] + uridine(34) in tRNA + AH2 + ATP = 2-thiouridine(34) in tRNA + L-cysteinyl-[protein] + A + AMP + diphosphate + H(+). Its function is as follows. Catalyzes the 2-thiolation of uridine at the wobble position (U34) of tRNA, leading to the formation of s(2)U34. The sequence is that of tRNA-specific 2-thiouridylase MnmA from Rickettsia peacockii (strain Rustic).